Consider the following 181-residue polypeptide: TATA-box-binding protein (181 aa).

Tandem repeats lie at residues 7–83 (IVNV…IKEL) and 98–173 (VQNM…SATL).

Belongs to the TBP family.

General factor that plays a role in the activation of archaeal genes transcribed by RNA polymerase. Binds specifically to the TATA box promoter element which lies close to the position of transcription initiation. The protein is TATA-box-binding protein of Methanococcus vannielii (strain ATCC 35089 / DSM 1224 / JCM 13029 / OCM 148 / SB).